The chain runs to 84 residues: MSDRIRILLGRVCNKKMNKSVVVSIERLIKHSTYEKFIKRTTKLHVHDPNNETNVGDLVEVQECRPISKTKSWILTSIIKKSNF.

This sequence belongs to the universal ribosomal protein uS17 family. Part of the 30S ribosomal subunit.

One of the primary rRNA binding proteins, it binds specifically to the 5'-end of 16S ribosomal RNA. This chain is Small ribosomal subunit protein uS17, found in Blochmanniella pennsylvanica (strain BPEN).